The chain runs to 311 residues: NAD kinase (311 aa).

Asp89 acts as the Proton acceptor in catalysis. Residues 89-90, Arg94, 163-164, Asp193, and 204-209 contribute to the NAD(+) site; these read DG, NE, and TAYAFS.

It belongs to the NAD kinase family. A divalent metal cation is required as a cofactor.

The protein localises to the cytoplasm. The catalysed reaction is NAD(+) + ATP = ADP + NADP(+) + H(+). Its function is as follows. Involved in the regulation of the intracellular balance of NAD and NADP, and is a key enzyme in the biosynthesis of NADP. Catalyzes specifically the phosphorylation on 2'-hydroxyl of the adenosine moiety of NAD to yield NADP. This chain is NAD kinase, found in Mycobacterium leprae (strain Br4923).